Reading from the N-terminus, the 183-residue chain is tRNA-splicing endonuclease (183 aa).

Active-site residues include Tyr120, His128, and Lys159.

This sequence belongs to the tRNA-intron endonuclease family. Archaeal short subfamily. As to quaternary structure, homotetramer; although the tetramer contains four active sites, only two participate in the cleavage. Therefore, it should be considered as a dimer of dimers.

The catalysed reaction is pretRNA = a 3'-half-tRNA molecule with a 5'-OH end + a 5'-half-tRNA molecule with a 2',3'-cyclic phosphate end + an intron with a 2',3'-cyclic phosphate and a 5'-hydroxyl terminus.. Functionally, endonuclease that removes tRNA introns. Cleaves pre-tRNA at the 5'- and 3'-splice sites to release the intron. The products are an intron and two tRNA half-molecules bearing 2',3' cyclic phosphate and 5'-OH termini. Recognizes a pseudosymmetric substrate in which 2 bulged loops of 3 bases are separated by a stem of 4 bp. This is tRNA-splicing endonuclease from Pyrobaculum aerophilum (strain ATCC 51768 / DSM 7523 / JCM 9630 / CIP 104966 / NBRC 100827 / IM2).